The following is a 274-amino-acid chain: 2-dehydro-3-deoxyphosphooctonate aldolase (274 aa).

The protein belongs to the KdsA family.

The protein localises to the cytoplasm. The enzyme catalyses D-arabinose 5-phosphate + phosphoenolpyruvate + H2O = 3-deoxy-alpha-D-manno-2-octulosonate-8-phosphate + phosphate. It participates in carbohydrate biosynthesis; 3-deoxy-D-manno-octulosonate biosynthesis; 3-deoxy-D-manno-octulosonate from D-ribulose 5-phosphate: step 2/3. It functions in the pathway bacterial outer membrane biogenesis; lipopolysaccharide biosynthesis. The polypeptide is 2-dehydro-3-deoxyphosphooctonate aldolase (Rickettsia bellii (strain OSU 85-389)).